Here is a 695-residue protein sequence, read N- to C-terminus: Putative pentatricopeptide repeat-containing protein At1g77010, mitochondrial (695 aa).

A mitochondrion-targeting transit peptide spans 1–64 (MILKYNSSYR…KGFLSSIVIV (64 aa)). PPR repeat units lie at residues 61-91 (IVIV…MPDR), 92-122 (NYFS…MPER), 123-157 (DGYS…DVVT), 159-184 (NSLL…LNFS), 186-220 (DAIT…GVEC), 221-251 (DSKM…IREP), 252-282 (DDHS…KSNR), 283-313 (CVIL…MRNE), 317-351 (DSRT…GLID), 352-382 (DIVV…VESY), 383-417 (DTIL…SLIS), 418-448 (WNSM…DLPT), 449-483 (DEVS…GLDS), 484-514 (DQVV…MVKS), 515-549 (DEVP…GIRP), 550-585 (TQIT…GFVP), and 586-616 (DKEH…MPFD). Positions 621 to 695 (MWSSILRGCV…KNPGSSWTDC (75 aa)) are type E motif; degenerate.

This sequence belongs to the PPR family. PCMP-E subfamily.

Its subcellular location is the mitochondrion. This is Putative pentatricopeptide repeat-containing protein At1g77010, mitochondrial (PCMP-E5) from Arabidopsis thaliana (Mouse-ear cress).